Consider the following 493-residue polypeptide: UDP-N-acetylmuramate--L-alanine ligase (493 aa).

126 to 132 contacts ATP; it reads GTHGKTT.

This sequence belongs to the MurCDEF family.

It localises to the cytoplasm. It carries out the reaction UDP-N-acetyl-alpha-D-muramate + L-alanine + ATP = UDP-N-acetyl-alpha-D-muramoyl-L-alanine + ADP + phosphate + H(+). Its pathway is cell wall biogenesis; peptidoglycan biosynthesis. In terms of biological role, cell wall formation. In Hamiltonella defensa subsp. Acyrthosiphon pisum (strain 5AT), this protein is UDP-N-acetylmuramate--L-alanine ligase.